The chain runs to 95 residues: Nucleoid-associated protein MARTH_orf159 (95 aa).

The protein belongs to the YbaB/EbfC family. As to quaternary structure, homodimer.

Its subcellular location is the cytoplasm. The protein resides in the nucleoid. Binds to DNA and alters its conformation. May be involved in regulation of gene expression, nucleoid organization and DNA protection. This is Nucleoid-associated protein MARTH_orf159 from Metamycoplasma arthritidis (strain 158L3-1) (Mycoplasma arthritidis).